Here is a 423-residue protein sequence, read N- to C-terminus: UDP-N-acetylglucosamine 1-carboxyvinyltransferase (423 aa).

22–23 contributes to the phosphoenolpyruvate binding site; that stretch reads KN. Residue R93 coordinates UDP-N-acetyl-alpha-D-glucosamine. C117 functions as the Proton donor in the catalytic mechanism. 2-(S-cysteinyl)pyruvic acid O-phosphothioketal is present on C117. Residues 122–126, D308, and V330 contribute to the UDP-N-acetyl-alpha-D-glucosamine site; that span reads RPVDL.

Belongs to the EPSP synthase family. MurA subfamily.

It is found in the cytoplasm. It catalyses the reaction phosphoenolpyruvate + UDP-N-acetyl-alpha-D-glucosamine = UDP-N-acetyl-3-O-(1-carboxyvinyl)-alpha-D-glucosamine + phosphate. The protein operates within cell wall biogenesis; peptidoglycan biosynthesis. Cell wall formation. Adds enolpyruvyl to UDP-N-acetylglucosamine. The polypeptide is UDP-N-acetylglucosamine 1-carboxyvinyltransferase (Finegoldia magna (strain ATCC 29328 / DSM 20472 / WAL 2508) (Peptostreptococcus magnus)).